A 112-amino-acid polypeptide reads, in one-letter code: MDVYRIKKNAEFRAVYKRGKSFSNNLLVLYVYMNRKNVNRLGVSVSKKVGKSVVRNRIKRLIKESFRLNSDYMKVENGYDLVFIARKASNGKSYVEINNSVKNLIKKAGLYK.

The protein belongs to the RnpA family. In terms of assembly, consists of a catalytic RNA component (M1 or rnpB) and a protein subunit.

The catalysed reaction is Endonucleolytic cleavage of RNA, removing 5'-extranucleotides from tRNA precursor.. In terms of biological role, RNaseP catalyzes the removal of the 5'-leader sequence from pre-tRNA to produce the mature 5'-terminus. It can also cleave other RNA substrates such as 4.5S RNA. The protein component plays an auxiliary but essential role in vivo by binding to the 5'-leader sequence and broadening the substrate specificity of the ribozyme. In Clostridium kluyveri (strain ATCC 8527 / DSM 555 / NBRC 12016 / NCIMB 10680 / K1), this protein is Ribonuclease P protein component.